We begin with the raw amino-acid sequence, 551 residues long: Glucose-6-phosphate isomerase (551 aa).

The Proton donor role is filled by E349. Active-site residues include H378 and K480.

This sequence belongs to the GPI family.

It localises to the cytoplasm. It catalyses the reaction alpha-D-glucose 6-phosphate = beta-D-fructose 6-phosphate. It participates in carbohydrate biosynthesis; gluconeogenesis. Its pathway is carbohydrate degradation; glycolysis; D-glyceraldehyde 3-phosphate and glycerone phosphate from D-glucose: step 2/4. Functionally, catalyzes the reversible isomerization of glucose-6-phosphate to fructose-6-phosphate. This is Glucose-6-phosphate isomerase from Parasynechococcus marenigrum (strain WH8102).